Reading from the N-terminus, the 125-residue chain is uncharacterized protein (125 aa).

This is an uncharacterized protein from Bacillus subtilis (strain 168).